The primary structure comprises 521 residues: Bifunctional purine biosynthesis protein PurH (521 aa).

In terms of domain architecture, MGS-like spans 1-145; it reads MIKQALISVS…KNHRDVTVVV (145 aa).

Belongs to the PurH family.

It catalyses the reaction (6R)-10-formyltetrahydrofolate + 5-amino-1-(5-phospho-beta-D-ribosyl)imidazole-4-carboxamide = 5-formamido-1-(5-phospho-D-ribosyl)imidazole-4-carboxamide + (6S)-5,6,7,8-tetrahydrofolate. The catalysed reaction is IMP + H2O = 5-formamido-1-(5-phospho-D-ribosyl)imidazole-4-carboxamide. It participates in purine metabolism; IMP biosynthesis via de novo pathway; 5-formamido-1-(5-phospho-D-ribosyl)imidazole-4-carboxamide from 5-amino-1-(5-phospho-D-ribosyl)imidazole-4-carboxamide (10-formyl THF route): step 1/1. Its pathway is purine metabolism; IMP biosynthesis via de novo pathway; IMP from 5-formamido-1-(5-phospho-D-ribosyl)imidazole-4-carboxamide: step 1/1. This is Bifunctional purine biosynthesis protein PurH from Paraburkholderia xenovorans (strain LB400).